Here is a 936-residue protein sequence, read N- to C-terminus: Isoleucine--tRNA ligase (936 aa).

Residues 58-68 (PYANGRAHLGT) carry the 'HIGH' region motif. L-isoleucyl-5'-AMP is bound at residue Glu-561. The 'KMSKS' region signature appears at 602–606 (KMSKS). Position 605 (Lys-605) interacts with ATP. Positions 899, 902, 919, and 922 each coordinate Zn(2+).

Belongs to the class-I aminoacyl-tRNA synthetase family. IleS type 1 subfamily. In terms of assembly, monomer. Zn(2+) is required as a cofactor.

The protein resides in the cytoplasm. It catalyses the reaction tRNA(Ile) + L-isoleucine + ATP = L-isoleucyl-tRNA(Ile) + AMP + diphosphate. Catalyzes the attachment of isoleucine to tRNA(Ile). As IleRS can inadvertently accommodate and process structurally similar amino acids such as valine, to avoid such errors it has two additional distinct tRNA(Ile)-dependent editing activities. One activity is designated as 'pretransfer' editing and involves the hydrolysis of activated Val-AMP. The other activity is designated 'posttransfer' editing and involves deacylation of mischarged Val-tRNA(Ile). The protein is Isoleucine--tRNA ligase of Coxiella burnetii (strain CbuG_Q212) (Coxiella burnetii (strain Q212)).